The primary structure comprises 420 residues: ATP phosphoribosyltransferase regulatory subunit (420 aa).

Belongs to the class-II aminoacyl-tRNA synthetase family. HisZ subfamily. In terms of assembly, heteromultimer composed of HisG and HisZ subunits.

Its subcellular location is the cytoplasm. It functions in the pathway amino-acid biosynthesis; L-histidine biosynthesis; L-histidine from 5-phospho-alpha-D-ribose 1-diphosphate: step 1/9. Required for the first step of histidine biosynthesis. May allow the feedback regulation of ATP phosphoribosyltransferase activity by histidine. The polypeptide is ATP phosphoribosyltransferase regulatory subunit (Bacillus anthracis (strain A0248)).